The chain runs to 481 residues: UDP-N-acetylmuramoyl-L-alanyl-D-glutamate--L-lysine ligase (481 aa).

Ser42 is a binding site for UDP-N-acetyl-alpha-D-muramoyl-L-alanyl-D-glutamate. 118–124 (GTKGKTT) is an ATP binding site. UDP-N-acetyl-alpha-D-muramoyl-L-alanyl-D-glutamate is bound by residues 160–161 (TT), Ser187, and Arg195. At Lys229 the chain carries N6-carboxylysine. The L-lysine recognition motif motif lies at 404–407 (DDPN).

Belongs to the MurCDEF family. MurE subfamily. In terms of processing, carboxylation is probably crucial for Mg(2+) binding and, consequently, for the gamma-phosphate positioning of ATP.

It localises to the cytoplasm. The enzyme catalyses UDP-N-acetyl-alpha-D-muramoyl-L-alanyl-D-glutamate + L-lysine + ATP = UDP-N-acetyl-alpha-D-muramoyl-L-alanyl-gamma-D-glutamyl-L-lysine + ADP + phosphate + H(+). Its pathway is cell wall biogenesis; peptidoglycan biosynthesis. Its function is as follows. Catalyzes the addition of L-lysine to the nucleotide precursor UDP-N-acetylmuramoyl-L-alanyl-D-glutamate (UMAG) in the biosynthesis of bacterial cell-wall peptidoglycan. This is UDP-N-acetylmuramoyl-L-alanyl-D-glutamate--L-lysine ligase from Streptococcus sanguinis (strain SK36).